The primary structure comprises 204 residues: Transmembrane protein 186 (204 aa).

The Mitochondrial matrix portion of the chain corresponds to 1–69 (MLELLCRVSP…RLVAALSRLK (69 aa)). A helical transmembrane segment spans residues 70 to 90 (VYQAVITAAGTPIVFALGSAG). Residues 91–95 (QLSTD) lie on the Mitochondrial intermembrane side of the membrane. Residues 96–116 (ALAIYAAIGVTGLITLTLASY) form a helical membrane-spanning segment. Residues 117 to 204 (ASSNLVGFIY…RQLFEGLFGN (88 aa)) lie on the Mitochondrial matrix side of the membrane.

Belongs to the TMEM186 family. In terms of assembly, associates with mitochondrial complex I assembly intermediates during its biogenesis.

The protein resides in the mitochondrion inner membrane. Functionally, as part of the MCIA complex, required for efficient assembly of the mitochondrial complex I. In Drosophila melanogaster (Fruit fly), this protein is Transmembrane protein 186.